Here is a 329-residue protein sequence, read N- to C-terminus: 2-oxoglutarate-dependent dioxygenase htyE (329 aa).

One can recognise a Fe2OG dioxygenase domain in the interval 175-289 (NTSELRLLHY…RYSVAYFGKP (115 aa)). 3 residues coordinate Fe cation: His-201, Asp-203, and His-261. Arg-280 lines the 2-oxoglutarate pocket.

Belongs to the iron/ascorbate-dependent oxidoreductase family. Fe(2+) is required as a cofactor.

It functions in the pathway antifungal biosynthesis. Functionally, 2-oxoglutarate-dependent dioxygenase; part of the gene cluster that mediates the de novo generation of L-homotyrosine from acetyl-CoA and 4-hydroxyphenyl-pyruvate. L-homotyrosine is a building block of echinocandin B, a fungal lipidated cyclic hexapeptide that acts as an antifungal agent. L-homotyrosine 4-hydroxyphenyl-pyruvate first undergoes an aldol-type condensation by htyA with the C-2 of acetyl-CoA followed by the release of CoA to form 2-(4-hydroxybenzyl)-malate. This is followed by isomerization of 2-(4-hydroxy-benzyl)-malate to 3-(4-hydroxybenzyl)-malate by htyD. Thereafter, 3-(4-hydroxybenzyl)-malate undergoes decarboxylation and oxidation to form 2-oxo-4-(4-hydroxybenzyl)butanoic acid, coupled to reduction of NAD(+) to NADH by htyC. The product then undergoes transamination catalyzed by htyB to form L-homotyrosine. This chain is 2-oxoglutarate-dependent dioxygenase htyE, found in Aspergillus rugulosus (Emericella rugulosa).